Here is a 371-residue protein sequence, read N- to C-terminus: NDMA-dependent alcohol dehydrogenase (371 aa).

Residues Cys-40, His-61, Cys-91, Cys-94, Cys-97, Cys-105, and Cys-167 each coordinate Zn(2+).

It belongs to the zinc-containing alcohol dehydrogenase family. Homotrimer. The cofactor is NADH.

It catalyses the reaction N,N-dimethyl-4-nitrosoaniline + a primary alcohol = 4-(hydroxylamino)-N,N-dimethylaniline + an aldehyde. The catalysed reaction is ethanol + A = acetaldehyde + AH2. Its activity is regulated as follows. Inhibited by trans-4-(N,N-dimethylamino)-cinnamaldehyde through direct binding to the catalytic zinc ion in a substrate-like geometry. Isobutyramide acts as a competitive inhibitor with respect to the electron acceptor NDMA. Acetaldehyde, AMP, ADP, ATP, as well as CuSO(4), FeSO(4), HgCl(2), NiCl(2), ZnSO(4), KCN, and NaN(3) are additional inhibitors of the catalytic activity. In terms of biological role, catalytically different from common alcohol dehydrogenases. Effective in oxidizing ethanol, other primary alcohols and benzylalcohol only in the presence of p-nitroso-N,N-dimethylaniline (NDMA) as an electron acceptor. NADH acts as a cofactor here instead as a coenzyme. This is NDMA-dependent alcohol dehydrogenase from Amycolatopsis methanolica.